We begin with the raw amino-acid sequence, 664 residues long: Methionine--tRNA ligase (664 aa).

The short motif at 15–25 (YYPSGKLHIGH) is the 'HIGH' region element. Residues 311-315 (KMSKS) carry the 'KMSKS' region motif. K314 provides a ligand contact to ATP. The segment at 536–556 (MQGSAPAKEETKEEEPQEVDR) is disordered. Residues 570–662 (LRVAEVIEAE…IDQSLPKGTR (93 aa)) enclose the tRNA-binding domain.

Belongs to the class-I aminoacyl-tRNA synthetase family. MetG type 2B subfamily. As to quaternary structure, homodimer.

It is found in the cytoplasm. The enzyme catalyses tRNA(Met) + L-methionine + ATP = L-methionyl-tRNA(Met) + AMP + diphosphate. Functionally, is required not only for elongation of protein synthesis but also for the initiation of all mRNA translation through initiator tRNA(fMet) aminoacylation. The protein is Methionine--tRNA ligase (metG) of Bacillus subtilis (strain 168).